The primary structure comprises 256 residues: 5-keto-4-deoxy-D-glucarate aldolase (256 aa).

The Proton acceptor role is filled by H50. Q151 is a binding site for substrate. E153 contributes to the Mg(2+) binding site. Substrate is bound by residues S178 and D179. D179 is a Mg(2+) binding site.

It belongs to the HpcH/HpaI aldolase family. KDGluc aldolase subfamily. As to quaternary structure, homohexamer; trimer of dimers. It depends on Mg(2+) as a cofactor.

It carries out the reaction 5-dehydro-4-deoxy-D-glucarate = 2-hydroxy-3-oxopropanoate + pyruvate. The enzyme catalyses 2-dehydro-3-deoxy-D-glucarate = 2-hydroxy-3-oxopropanoate + pyruvate. It participates in carbohydrate acid metabolism; galactarate degradation; D-glycerate from galactarate: step 2/3. Catalyzes the reversible retro-aldol cleavage of both 5-keto-4-deoxy-D-glucarate and 2-keto-3-deoxy-D-glucarate to pyruvate and tartronic semialdehyde. The polypeptide is 5-keto-4-deoxy-D-glucarate aldolase (Escherichia coli (strain ATCC 8739 / DSM 1576 / NBRC 3972 / NCIMB 8545 / WDCM 00012 / Crooks)).